A 342-amino-acid polypeptide reads, in one-letter code: Cystein proteinase inhibitor protein salarin (342 aa).

Positions 1–19 (MKSLVLLLLVAVTVSSVVS) are cleaved as a signal peptide. Residue Asn153 is glycosylated (N-linked (GlcNAc) asparagine). O-linked (GlcNAc) threonine glycosylation is present at Thr184.

In terms of processing, N-glycosylated, with sialylated biantennary complex-type glycans. Post-translationally, O-glycosylated, with sialylated oligosaccharides. As to expression, expressed in the skin, liver. intestine, spleen, pancreas and kidney.

The protein resides in the cytoplasm. The protein localises to the vacuole. In terms of biological role, inhibits papain and ficin (cysteine proteinases) but not trypsin (a serine proteinase). This is Cystein proteinase inhibitor protein salarin (salarin) from Salmo salar (Atlantic salmon).